A 211-amino-acid polypeptide reads, in one-letter code: tRNA (guanine-N(7)-)-methyltransferase (211 aa).

Positions 44, 69, 96, and 118 each coordinate S-adenosyl-L-methionine. Residue aspartate 118 is part of the active site. Lysine 122 is a binding site for substrate. The segment at 124–129 is interaction with RNA; that stretch reads KHEKRR. Substrate contacts are provided by residues aspartate 154 and 191-194; that span reads TEYE.

The protein belongs to the class I-like SAM-binding methyltransferase superfamily. TrmB family.

It carries out the reaction guanosine(46) in tRNA + S-adenosyl-L-methionine = N(7)-methylguanosine(46) in tRNA + S-adenosyl-L-homocysteine. Its pathway is tRNA modification; N(7)-methylguanine-tRNA biosynthesis. Functionally, catalyzes the formation of N(7)-methylguanine at position 46 (m7G46) in tRNA. This Streptococcus uberis (strain ATCC BAA-854 / 0140J) protein is tRNA (guanine-N(7)-)-methyltransferase.